A 378-amino-acid chain; its full sequence is Ribosomal RNA large subunit methyltransferase G (378 aa).

The protein belongs to the methyltransferase superfamily. RlmG family.

Its subcellular location is the cytoplasm. The catalysed reaction is guanosine(1835) in 23S rRNA + S-adenosyl-L-methionine = N(2)-methylguanosine(1835) in 23S rRNA + S-adenosyl-L-homocysteine + H(+). Functionally, specifically methylates the guanine in position 1835 (m2G1835) of 23S rRNA. The sequence is that of Ribosomal RNA large subunit methyltransferase G from Shigella boydii serotype 18 (strain CDC 3083-94 / BS512).